Consider the following 234-residue polypeptide: Enterobactin synthase component D (234 aa).

The Mg(2+) site is built by D107, E109, and E152.

Belongs to the P-Pant transferase superfamily. EntD family. As to quaternary structure, entB, EntD, EntE, and EntF form a multienzyme complex called enterobactin synthase. Mg(2+) serves as cofactor.

Its subcellular location is the membrane. It catalyses the reaction apo-[aryl-carrier protein] + CoA = holo-[aryl-carrier protein] + adenosine 3',5'-bisphosphate + H(+). The catalysed reaction is apo-[peptidyl-carrier protein] + CoA = holo-[peptidyl-carrier protein] + adenosine 3',5'-bisphosphate + H(+). It functions in the pathway siderophore biosynthesis; enterobactin biosynthesis. Functionally, involved in the biosynthesis of the siderophore enterobactin (enterochelin), which is a macrocyclic trimeric lactone of N-(2,3-dihydroxybenzoyl)-serine. The serine trilactone serves as a scaffolding for the three catechol functionalities that provide hexadentate coordination for the tightly ligated iron(2+) atoms. Plays an essential role in the assembly of the enterobactin by catalyzing the transfer of the 4'-phosphopantetheine (Ppant) moiety from coenzyme A to the apo-domains of both EntB (ArCP domain) and EntF (PCP domain) to yield their holo-forms which make them competent for the activation of 2,3-dihydroxybenzoate (DHB) and L-serine, respectively. The sequence is that of Enterobactin synthase component D from Salmonella typhimurium (strain LT2 / SGSC1412 / ATCC 700720).